The sequence spans 456 residues: 3-isopropylmalate dehydratase large subunit (456 aa).

C336, C396, and C399 together coordinate [4Fe-4S] cluster.

It belongs to the aconitase/IPM isomerase family. LeuC type 1 subfamily. Heterodimer of LeuC and LeuD. It depends on [4Fe-4S] cluster as a cofactor.

The catalysed reaction is (2R,3S)-3-isopropylmalate = (2S)-2-isopropylmalate. The protein operates within amino-acid biosynthesis; L-leucine biosynthesis; L-leucine from 3-methyl-2-oxobutanoate: step 2/4. Functionally, catalyzes the isomerization between 2-isopropylmalate and 3-isopropylmalate, via the formation of 2-isopropylmaleate. This Staphylococcus aureus (strain MW2) protein is 3-isopropylmalate dehydratase large subunit.